A 433-amino-acid polypeptide reads, in one-letter code: Serine hydroxymethyltransferase (433 aa).

(6S)-5,6,7,8-tetrahydrofolate-binding positions include leucine 131 and 135–137; that span reads GHL. The residue at position 240 (lysine 240) is an N6-(pyridoxal phosphate)lysine.

This sequence belongs to the SHMT family. Homodimer. Requires pyridoxal 5'-phosphate as cofactor.

It is found in the cytoplasm. The catalysed reaction is (6R)-5,10-methylene-5,6,7,8-tetrahydrofolate + glycine + H2O = (6S)-5,6,7,8-tetrahydrofolate + L-serine. It participates in one-carbon metabolism; tetrahydrofolate interconversion. It functions in the pathway amino-acid biosynthesis; glycine biosynthesis; glycine from L-serine: step 1/1. Functionally, catalyzes the reversible interconversion of serine and glycine with tetrahydrofolate (THF) serving as the one-carbon carrier. This reaction serves as the major source of one-carbon groups required for the biosynthesis of purines, thymidylate, methionine, and other important biomolecules. Also exhibits THF-independent aldolase activity toward beta-hydroxyamino acids, producing glycine and aldehydes, via a retro-aldol mechanism. This Bifidobacterium adolescentis (strain ATCC 15703 / DSM 20083 / NCTC 11814 / E194a) protein is Serine hydroxymethyltransferase.